A 675-amino-acid polypeptide reads, in one-letter code: Probable metal-nicotianamine transporter YSL16 (675 aa).

The segment covering 1-11 (MDRHALGGGGA) has biased composition (gly residues). Residues 1 to 20 (MDRHALGGGGALEIEKTPEA) are disordered. Helical transmembrane passes span 50–70 (GMVA…KLSL), 73–93 (GLIP…LRGW), 118–138 (CAVA…LLGL), 162–182 (GIGW…LTLL), 231–251 (ISFL…CGFL), 283–303 (LVNL…WPLI), 329–349 (FICI…VIVV), 393–413 (MAYT…PVMF), 421–441 (VIIA…GTGL), 453–473 (IALF…AGLV), 507–527 (VGQV…FFLF), 567–587 (LQLC…RDFL), 605–625 (FLVG…VFLW), and 633–653 (AALL…IWTF).

The protein belongs to the YSL (TC 2.A.67.2) family. Expressed in roots.

The protein resides in the membrane. In terms of biological role, may be involved in the transport of nicotianamine-chelated metals. The polypeptide is Probable metal-nicotianamine transporter YSL16 (YSL16) (Oryza sativa subsp. japonica (Rice)).